The sequence spans 88 residues: Small ribosomal subunit protein bS16c (88 aa).

Belongs to the bacterial ribosomal protein bS16 family.

It localises to the plastid. It is found in the chloroplast. This Citrus sinensis (Sweet orange) protein is Small ribosomal subunit protein bS16c.